The primary structure comprises 361 residues: Peptide chain release factor 1 (361 aa).

Q235 carries the N5-methylglutamine modification.

Belongs to the prokaryotic/mitochondrial release factor family. In terms of processing, methylated by PrmC. Methylation increases the termination efficiency of RF1.

It localises to the cytoplasm. In terms of biological role, peptide chain release factor 1 directs the termination of translation in response to the peptide chain termination codons UAG and UAA. The chain is Peptide chain release factor 1 from Buchnera aphidicola subsp. Acyrthosiphon pisum (strain 5A).